Consider the following 211-residue polypeptide: Large ribosomal subunit protein bL25 (211 aa).

The tract at residues 186 to 211 (GRALQSMDAAESAVEQPGEQPATAAG) is disordered.

This sequence belongs to the bacterial ribosomal protein bL25 family. CTC subfamily. In terms of assembly, part of the 50S ribosomal subunit; part of the 5S rRNA/L5/L18/L25 subcomplex. Contacts the 5S rRNA. Binds to the 5S rRNA independently of L5 and L18.

This is one of the proteins that binds to the 5S RNA in the ribosome where it forms part of the central protuberance. The polypeptide is Large ribosomal subunit protein bL25 (Gloeobacter violaceus (strain ATCC 29082 / PCC 7421)).